A 318-amino-acid chain; its full sequence is MSAHNRGTELDLSWISKIQVNHPAVLRRAEQIQARRTVKKEWQAAWLLKAVTFIDLTTLSGDDTSSNIQRLCYKAKYPIREDLLKALNMHDKGITTAAVCVYPARVCDAVKALKAAGCNIPVASVAAGFPAGQTHLKTRLEEIRLAVEDGATEIDVVINRSLVLTGQWEALYDEIRQFRKACGEAHLKTILATGELGTLTNVYKASMIAMMAGSDFIKTSTGKETVNATFPVAIVMLRAIRDFFWKTGNKIGFKPAGGIRSAKDSLAWLSLVKEELGDEWLKPELFRIGASTLLSDIERQIYHHVTGRYAAYHDLPMS.

The Proton donor/acceptor role is filled by Asp155. Lys218 (schiff-base intermediate with acetaldehyde) is an active-site residue. The active-site Proton donor/acceptor is the Lys254.

It belongs to the DeoC/FbaB aldolase family. DeoC type 2 subfamily. Interacts with YBX1. In terms of tissue distribution, mainly expressed in liver, lung and colon.

The protein localises to the cytoplasm. It localises to the cytoplasmic granule. Its subcellular location is the nucleus. The enzyme catalyses 2-deoxy-D-ribose 5-phosphate = D-glyceraldehyde 3-phosphate + acetaldehyde. It functions in the pathway carbohydrate degradation; 2-deoxy-D-ribose 1-phosphate degradation; D-glyceraldehyde 3-phosphate and acetaldehyde from 2-deoxy-alpha-D-ribose 1-phosphate: step 2/2. Functionally, catalyzes a reversible aldol reaction between acetaldehyde and D-glyceraldehyde 3-phosphate to generate 2-deoxy-D-ribose 5-phosphate. Participates in stress granule (SG) assembly. May allow ATP production from extracellular deoxyinosine in conditions of energy deprivation. The protein is Deoxyribose-phosphate aldolase (DERA) of Homo sapiens (Human).